Here is a 794-residue protein sequence, read N- to C-terminus: Glutamine--tRNA ligase (794 aa).

A disordered region spans residues 192–217 (DNEKPKKKKEKPAKVEDKAAPVATSE). A 'HIGH' region motif is present at residues 277–287 (PEPNGYLHIGH). Residues 278–280 (EPN) and 284–290 (HIGHAKA) contribute to the ATP site. Residues aspartate 310 and tyrosine 450 each coordinate L-glutamine. Residues threonine 469, 498–499 (RL), and 506–508 (MSK) contribute to the ATP site. Residues 505-509 (VMSKR) carry the 'KMSKS' region motif.

It belongs to the class-I aminoacyl-tRNA synthetase family.

The enzyme catalyses tRNA(Gln) + L-glutamine + ATP = L-glutaminyl-tRNA(Gln) + AMP + diphosphate. In Lupinus luteus (European yellow lupine), this protein is Glutamine--tRNA ligase.